The following is a 134-amino-acid chain: Small ribosomal subunit protein uS11 (134 aa).

Disordered regions lie at residues 1 to 24 and 115 to 134; these read MPPK…VAHG and IQDV…RRRV. Residues 9-18 show a composition bias toward basic residues; it reads AVKKVRRKEK.

The protein belongs to the universal ribosomal protein uS11 family. As to quaternary structure, part of the 30S ribosomal subunit. Interacts with proteins S7 and S18. Binds to IF-3.

Located on the platform of the 30S subunit, it bridges several disparate RNA helices of the 16S rRNA. Forms part of the Shine-Dalgarno cleft in the 70S ribosome. In Saccharopolyspora erythraea (strain ATCC 11635 / DSM 40517 / JCM 4748 / NBRC 13426 / NCIMB 8594 / NRRL 2338), this protein is Small ribosomal subunit protein uS11.